The primary structure comprises 148 residues: Gas vesicle protein J (148 aa).

Disordered regions lie at residues 1-21 (MTTTPIHPTRPQTNSNRVIPT) and 118-148 (EETTLTANNPEDLQPMYEVNSQEGDNSQLEA). Polar residues predominate over residues 136–148 (VNSQEGDNSQLEA).

It belongs to the gas vesicle GvpA family. Interacts with GvpA.

It is found in the gas vesicle. Its function is as follows. A minor component of the gas vesicle, might be involved in nucleating gas vesicle formation. Gas vesicles (GV) are hollow, gas filled proteinaceous nanostructures. During planktonic growth they allow positioning of the organism at a favorable depth for light or nutrient acquisition. Functionally, cluster expression in E.coli (gvpA1-gvpA2-gvpC-gvpN-gvpJ-gvpK-gvpF-gvpG-gvpV-gvpW) allows cells to float and produces irregularly shaped gas vesicles. In Nostoc sp. (strain PCC 7120 / SAG 25.82 / UTEX 2576), this protein is Gas vesicle protein J.